Reading from the N-terminus, the 382-residue chain is Galactose-1-phosphate uridylyltransferase (382 aa).

The Zn(2+) site is built by cysteine 52 and cysteine 55. UDP-alpha-D-glucose-binding positions include alanine 61 and 77 to 78 (ND). A Zn(2+)-binding site is contributed by histidine 121. Asparagine 185 is a binding site for UDP-alpha-D-glucose. Histidine 196 lines the Zn(2+) pocket. Histidine 198 serves as the catalytic Tele-UMP-histidine intermediate. Glutamine 200 contacts UDP-alpha-D-glucose. Fe cation is bound by residues glutamate 214, histidine 313, histidine 330, and histidine 332. UDP-alpha-D-glucose contacts are provided by residues 345–348 (KFLV) and 350–351 (FE).

Belongs to the galactose-1-phosphate uridylyltransferase type 1 family. Homodimer. It depends on Zn(2+) as a cofactor.

The catalysed reaction is alpha-D-galactose 1-phosphate + UDP-alpha-D-glucose = alpha-D-glucose 1-phosphate + UDP-alpha-D-galactose. The protein operates within carbohydrate metabolism; galactose metabolism. Functionally, essential for growth on galactose but not for cellulase induction. This chain is Galactose-1-phosphate uridylyltransferase (gal7), found in Hypocrea jecorina (Trichoderma reesei).